The following is a 209-amino-acid chain: Glutathione S-transferase (209 aa).

One can recognise a GST N-terminal domain in the interval 7–91 (FFFFFFFFFS…YLSKKYNISG (85 aa)). Glutathione contacts are provided by residues 62–63 (QV), 75–76 (QS), Asp-109, Lys-121, and Thr-125. The 117-residue stretch at 93–209 (GELNEFYADM…YIANRKESVY (117 aa)) folds into the GST C-terminal domain.

This sequence belongs to the GST superfamily. Homodimer. In the absence of ligands two homodimers may interact to form a tetramer.

The catalysed reaction is RX + glutathione = an S-substituted glutathione + a halide anion + H(+). Conjugation of reduced glutathione to a wide number of exogenous and endogenous hydrophobic electrophiles. May also function as a storage protein or ligandin for parasitotoxic ferriprotoporphyrin IX (hemin). The chain is Glutathione S-transferase from Plasmodium yoelii yoelii.